Here is a 104-residue protein sequence, read N- to C-terminus: uncharacterized protein (104 aa).

A compositionally biased stretch (basic and acidic residues) spans Pro-58 to Pro-71. The disordered stretch occupies residues Pro-58–Ala-84.

This is an uncharacterized protein from Mycobacterium tuberculosis (strain ATCC 25618 / H37Rv).